We begin with the raw amino-acid sequence, 322 residues long: Solute carrier family 35 member B1 (322 aa).

A run of 8 helical transmembrane segments spans residues 12–32 (LRLP…GILQ), 51–71 (FALT…KILI), 85–105 (WLYA…NSAL), 136–156 (YPLA…LFMY), 168–188 (TVGF…LTGV), 210–230 (LWST…WEFL), 243–263 (ILLF…TVVY), and 285–305 (VILF…LVFL). The Di-lysine motif signature appears at 318–322 (KKTSH).

It belongs to the nucleotide-sugar transporter family. SLC35B subfamily.

It localises to the endoplasmic reticulum membrane. The catalysed reaction is ADP(in) + ATP(out) = ADP(out) + ATP(in). It catalyses the reaction UDP(out) + ATP(in) = UDP(in) + ATP(out). It carries out the reaction UTP(out) + ATP(in) = UTP(in) + ATP(out). The enzyme catalyses dATP(out) + ATP(in) = dATP(in) + ATP(out). ATP:ADP antiporter that catalyzes the exchange of ATP and ADP across the endoplasmic reticulum (ER) membrane. Imports ATP from the cytosol to the ER lumen and exports ADP in the opposite direction. Regulates ER energy metabolism and protein biogenesis. Appears to be part of a calcium-dependent ER to cytosol low energy response axis, where calcium efflux from ER to the cytosol triggers ATP import into the ER lumen to maintain sufficient ATP supply. Provides ATP to ER chaperone HSPA5 that drives protein folding and trafficking in the ER. Can transport dATP, UTP or UDP in exchange for ATP, but the physiological relevance of this process remains to be established. This Rattus norvegicus (Rat) protein is Solute carrier family 35 member B1 (Slc35b1).